We begin with the raw amino-acid sequence, 352 residues long: tRNA pseudouridine synthase D (352 aa).

Asp-81 (nucleophile) is an active-site residue. A TRUD domain is found at Gly-157–Leu-303.

The protein belongs to the pseudouridine synthase TruD family.

It carries out the reaction uridine(13) in tRNA = pseudouridine(13) in tRNA. In terms of biological role, responsible for synthesis of pseudouridine from uracil-13 in transfer RNAs. The sequence is that of tRNA pseudouridine synthase D from Pseudomonas putida (strain ATCC 700007 / DSM 6899 / JCM 31910 / BCRC 17059 / LMG 24140 / F1).